A 61-amino-acid polypeptide reads, in one-letter code: DNA-binding protein 7a (61 aa).

The tract at residues 37 to 61 (NGKTGRGAVSEKDAPKELLEKLEKK) is disordered. Over residues 45–61 (VSEKDAPKELLEKLEKK) the composition is skewed to basic and acidic residues.

The protein belongs to the 7 kDa DNA-binding/endoribonuclease P2 family. As to quaternary structure, monomer.

It localises to the cytoplasm. Can constrain negative DNA supercoils. May be involved in maintaining the integrity of the genome at high temperature. The chain is DNA-binding protein 7a from Acidianus hospitalis (strain W1).